The sequence spans 82 residues: Progonadoliberin-3 (82 aa).

Residues 1 to 23 form the signal peptide; the sequence is MDLSNRTVVQVVVLALVAQVTLS. Position 24 is a pyrrolidone carboxylic acid (Q24). Residue G33 is modified to Glycine amide.

Belongs to the GnRH family.

It is found in the secreted. Stimulates the secretion of gonadotropins. The chain is Progonadoliberin-3 (gnrh3) from Salmo trutta (Brown trout).